The following is a 140-amino-acid chain: Ribonuclease P protein subunit p20 (140 aa).

The protein belongs to the histone-like Alba family. As to quaternary structure, component of nuclear RNase P and RNase MRP complexes. RNase P consists of a catalytic RNA moiety and 10 different protein chains; POP1, POP4, POP5, POP7, RPP14, RPP21, RPP25, RPP30, RPP38 and RPP40. Within the RNase P complex, POP1, POP7 and RPP25 form the 'finger' subcomplex, POP5, RPP14, RPP40 and homodimeric RPP30 form the 'palm' subcomplex, and RPP21, POP4 and RPP38 form the 'wrist' subcomplex. All subunits of the RNase P complex interact with the catalytic RNA. Several subunits of RNase P are also part of the RNase MRP complex. RNase MRP consists of a catalytic RNA moiety and about 8 protein subunits; POP1, POP7, RPP25, RPP30, RPP38, RPP40 and possibly also POP4 and POP5. Interacts with SMN1. POP7 forms a heterodimer with RPP25 that binds to the P3 stem loop of the catalytic RNA.

Its subcellular location is the nucleus. It is found in the nucleolus. The protein resides in the cytoplasm. The protein localises to the cytoplasmic granule. In terms of biological role, component of ribonuclease P, a ribonucleoprotein complex that generates mature tRNA molecules by cleaving their 5'-ends. Also a component of the MRP ribonuclease complex, which cleaves pre-rRNA sequences. The polypeptide is Ribonuclease P protein subunit p20 (POP7) (Homo sapiens (Human)).